The chain runs to 434 residues: Pyrichalasin H cluster regulator BC2 (434 aa).

Disordered regions lie at residues 297-321 and 362-383; these read GSSP…CSPL and HPGH…RLSH. Over residues 298–309 the composition is skewed to polar residues; sequence SSPSGTPESELT. The segment covering 362 to 380 has biased composition (basic and acidic residues); sequence HPGHEDHQQQQEEVKQHDR.

The protein localises to the nucleus. Transcription factor probably involved in regulation of gene cluster that mediates the biosynthesis of a tyrosine-derived cytochalasan acting as a fungal signal recognized by resistant rice plants and leads to avirulence in Pi33 resistant rice cultivars. This is Pyrichalasin H cluster regulator BC2 from Pyricularia oryzae (strain 70-15 / ATCC MYA-4617 / FGSC 8958) (Rice blast fungus).